Here is a 321-residue protein sequence, read N- to C-terminus: Cytochrome c biogenesis protein CcsA (321 aa).

Transmembrane regions (helical) follow at residues 17–37 (VVSIVITIHLITLLVDEIIGL), 46–63 (MTTFFCITGLLMTRWIYL), 71–91 (LYESLIFLSWSFSIIHMVPYF), 98–118 (LKAITAPSAIFTQGFATSGLL), 143–163 (MVLGYAALLCGSLLSLALLVI), 225–245 (IISLGFIFLTIGILSGAVWAN), 259–273 (TWAFITWTLFSIYLH), and 286–306 (AIVASMGFLIIWICYFGVNLL).

This sequence belongs to the CcmF/CycK/Ccl1/NrfE/CcsA family. In terms of assembly, may interact with Ccs1.

The protein resides in the plastid. The protein localises to the chloroplast thylakoid membrane. Required during biogenesis of c-type cytochromes (cytochrome c6 and cytochrome f) at the step of heme attachment. The polypeptide is Cytochrome c biogenesis protein CcsA (Morus indica (Mulberry)).